The chain runs to 232 residues: Protein FAM246B (232 aa).

Residues 19–31 (EVLRRVTGRRRDP) are compositionally biased toward basic and acidic residues. Disordered regions lie at residues 19-47 (EVLR…RAPG), 80-101 (AAGA…VCGE), 151-179 (ALLP…GPTL), and 191-232 (AASR…GGGD). Residues 211-220 (APARKNHKKM) are compositionally biased toward basic residues.

This sequence belongs to the FAM246 family.

This chain is Protein FAM246B, found in Homo sapiens (Human).